The sequence spans 98 residues: DNA-directed RNA polymerase subunit Rpo11 (98 aa).

The protein belongs to the archaeal Rpo11/eukaryotic RPB11/RPC19 RNA polymerase subunit family. As to quaternary structure, part of the RNA polymerase complex.

It is found in the cytoplasm. It catalyses the reaction RNA(n) + a ribonucleoside 5'-triphosphate = RNA(n+1) + diphosphate. Its function is as follows. DNA-dependent RNA polymerase (RNAP) catalyzes the transcription of DNA into RNA using the four ribonucleoside triphosphates as substrates. The polypeptide is DNA-directed RNA polymerase subunit Rpo11 (Korarchaeum cryptofilum (strain OPF8)).